The primary structure comprises 288 residues: Large ribosomal subunit protein uL2 (288 aa).

Disordered stretches follow at residues 1-46 and 226-288; these read MAIH…RNVY and MVMN…RGKK. A compositionally biased stretch (gly residues) spans 235–248; it reads NGGGQGKSKGGGGR. The segment covering 279-288 has biased composition (basic residues); that stretch reads HNGRKPRGKK.

The protein belongs to the universal ribosomal protein uL2 family. Part of the 50S ribosomal subunit. Forms a bridge to the 30S subunit in the 70S ribosome.

Its function is as follows. One of the primary rRNA binding proteins. Required for association of the 30S and 50S subunits to form the 70S ribosome, for tRNA binding and peptide bond formation. It has been suggested to have peptidyltransferase activity; this is somewhat controversial. Makes several contacts with the 16S rRNA in the 70S ribosome. In Opitutus terrae (strain DSM 11246 / JCM 15787 / PB90-1), this protein is Large ribosomal subunit protein uL2.